Here is a 305-residue protein sequence, read N- to C-terminus: Tyrosine recombinase XerC (305 aa).

Residues 4 to 95 form the Core-binding (CB) domain; that stretch reads TQIQELIIKW…AIKNFYKFLE (92 aa). Positions 116 to 298 constitute a Tyr recombinase domain; it reads LLPKALSEEE…SIKHLETAYV (183 aa). Residues Arg159, Lys182, His250, Arg253, and His276 contribute to the active site. Residue Tyr285 is the O-(3'-phospho-DNA)-tyrosine intermediate of the active site.

Belongs to the 'phage' integrase family. XerC subfamily. As to quaternary structure, forms a cyclic heterotetrameric complex composed of two molecules of XerC and two molecules of XerD.

It localises to the cytoplasm. Site-specific tyrosine recombinase, which acts by catalyzing the cutting and rejoining of the recombining DNA molecules. The XerC-XerD complex is essential to convert dimers of the bacterial chromosome into monomers to permit their segregation at cell division. It also contributes to the segregational stability of plasmids. This chain is Tyrosine recombinase XerC, found in Rickettsia bellii (strain OSU 85-389).